A 396-amino-acid polypeptide reads, in one-letter code: Putative T-box protein 39 (396 aa).

The T-box DNA-binding region spans 11–192 (MAEEDRWKQW…KNSTYGNRLD (182 aa)). The interval 185–215 (STYGNRLDGGNKRKNTDSSEERTSKRSKNET) is disordered. Residues 193–215 (GGNKRKNTDSSEERTSKRSKNET) show a composition bias toward basic and acidic residues.

It is found in the nucleus. The polypeptide is Putative T-box protein 39 (tbx-39) (Caenorhabditis elegans).